Here is a 694-residue protein sequence, read N- to C-terminus: Frizzled-2 (694 aa).

The signal sequence occupies residues 1–22 (MRHNRLKVLILGLVLLLTSCRA). The Extracellular segment spans residues 23–315 (DGPLHSADHG…GPFFSNDEKD (293 aa)). The FZ domain occupies 59–180 (DPNLRCEEIT…GDPDNLCMEQ (122 aa)). 5 cysteine pairs are disulfide-bonded: Cys-64-Cys-125, Cys-72-Cys-118, Cys-109-Cys-147, Cys-136-Cys-177, and Cys-140-Cys-164. N-linked (GlcNAc...) asparagine glycosylation is present at Asn-78. The segment at 175–253 (NLCMEQPSYT…QGEKASGKEC (79 aa)) is disordered. A compositionally biased stretch (gly residues) spans 187-224 (GSGGSSGGSGGSGSGSGSGGKRKQGGSGSGGSGAGGSS). The N-linked (GlcNAc...) asparagine glycan is linked to Asn-288. Residues 316-336 (FAGLWIALWSGLCFCSTLMTL) traverse the membrane as a helical segment. Residues 337-352 (TTFIIDTERFKYPERP) lie on the Cytoplasmic side of the membrane. The chain crosses the membrane as a helical span at residues 353–373 (IVFLSACYFMVAVGYLSRNFL). The Extracellular portion of the chain corresponds to 374–397 (QNEEIACDGLLLRESSTGPHSCTL). Residues 398-418 (VFLLTYFFGMASSIWWVILSF) traverse the membrane as a helical segment. The Cytoplasmic portion of the chain corresponds to 419 to 439 (TWFLAAGLKWGNEAITKHSQY). Residues 440-460 (FHLAAWLIPTVQSVAVLLLSA) traverse the membrane as a helical segment. Over 461–482 (VDGDPILGICYVGNLNPDHLKT) the chain is Extracellular. A helical membrane pass occupies residues 483-503 (FVLAPLFVYLVIGTTFLMAGF). The Cytoplasmic portion of the chain corresponds to 504–534 (VSLFRIRSVIKQQGGVGAGVKADKLEKLMIR). The helical transmembrane segment at 535 to 555 (IGIFSVLYTVPATIVIGCYLY) threads the bilayer. The Extracellular portion of the chain corresponds to 556–584 (EAAYFEDWIKALACPCAQVKGPGKKPLYS). Residues 585–605 (VLMLKYFMALAVGITSGVWIW) form a helical membrane-spanning segment. Residues 606–694 (SGKTLESWRR…VLKQPAASHV (89 aa)) lie on the Cytoplasmic side of the membrane. Residues 608–613 (KTLESW) carry the Lys-Thr-X-X-X-Trp motif, mediates interaction with the PDZ domain of Dvl family members motif. Positions 692–694 (SHV) match the PDZ-binding motif.

The protein belongs to the G-protein coupled receptor Fz/Smo family. As to quaternary structure, interacts with ATP6AP2.

It is found in the cell membrane. Receptor for Wnt proteins. Most of frizzled receptors are coupled to the beta-catenin canonical signaling pathway, which leads to the activation of disheveled proteins, inhibition of GSK-3 kinase, nuclear accumulation of beta-catenin and activation of Wnt target genes. A second signaling pathway involving PKC and calcium fluxes has been seen for some family members, but it is not yet clear if it represents a distinct pathway or if it can be integrated in the canonical pathway, as PKC seems to be required for Wnt-mediated inactivation of GSK-3 kinase. Both pathways seem to involve interactions with G-proteins. Required to coordinate the cytoskeletons of epidermal cells to produce a parallel array of cuticular hairs and bristles. In Drosophila melanogaster (Fruit fly), this protein is Frizzled-2 (fz2).